Consider the following 372-residue polypeptide: 4-hydroxy-3-methylbut-2-en-1-yl diphosphate synthase (flavodoxin) (372 aa).

Positions 270, 273, 305, and 312 each coordinate [4Fe-4S] cluster.

The protein belongs to the IspG family. Requires [4Fe-4S] cluster as cofactor.

It carries out the reaction (2E)-4-hydroxy-3-methylbut-2-enyl diphosphate + oxidized [flavodoxin] + H2O + 2 H(+) = 2-C-methyl-D-erythritol 2,4-cyclic diphosphate + reduced [flavodoxin]. Its pathway is isoprenoid biosynthesis; isopentenyl diphosphate biosynthesis via DXP pathway; isopentenyl diphosphate from 1-deoxy-D-xylulose 5-phosphate: step 5/6. Functionally, converts 2C-methyl-D-erythritol 2,4-cyclodiphosphate (ME-2,4cPP) into 1-hydroxy-2-methyl-2-(E)-butenyl 4-diphosphate. The polypeptide is 4-hydroxy-3-methylbut-2-en-1-yl diphosphate synthase (flavodoxin) (Salmonella gallinarum (strain 287/91 / NCTC 13346)).